The sequence spans 295 residues: ATP synthase gamma chain (295 aa).

This sequence belongs to the ATPase gamma chain family. In terms of assembly, F-type ATPases have 2 components, CF(1) - the catalytic core - and CF(0) - the membrane proton channel. CF(1) has five subunits: alpha(3), beta(3), gamma(1), delta(1), epsilon(1). CF(0) has three main subunits: a, b and c.

The protein localises to the cell inner membrane. Functionally, produces ATP from ADP in the presence of a proton gradient across the membrane. The gamma chain is believed to be important in regulating ATPase activity and the flow of protons through the CF(0) complex. This is ATP synthase gamma chain from Sulfurovum sp. (strain NBC37-1).